A 361-amino-acid chain; its full sequence is UPF0283 membrane protein Smed_1530 (361 aa).

The tract at residues 1–40 (MNDDSNGRRRRPAAFPVGTEDATSRELEQTPRRAPGSFSD) is disordered. Basic and acidic residues predominate over residues 22–31 (ATSRELEQTP). 2 helical membrane passes run 76–96 (FGKI…GLWV) and 109–129 (WLGY…LIVV).

This sequence belongs to the UPF0283 family.

The protein resides in the cell inner membrane. The chain is UPF0283 membrane protein Smed_1530 from Sinorhizobium medicae (strain WSM419) (Ensifer medicae).